The following is a 205-amino-acid chain: Small ribosomal subunit protein uS4 (205 aa).

Residues 19 to 45 (IWGRSKSPVNRREYGPGQHGQRRKGKL) form a disordered region. Residues 94–157 (RRLDAVVYRA…KQMALVLEAV (64 aa)) form the S4 RNA-binding domain.

The protein belongs to the universal ribosomal protein uS4 family. Part of the 30S ribosomal subunit. Contacts protein S5. The interaction surface between S4 and S5 is involved in control of translational fidelity.

Its function is as follows. One of the primary rRNA binding proteins, it binds directly to 16S rRNA where it nucleates assembly of the body of the 30S subunit. In terms of biological role, with S5 and S12 plays an important role in translational accuracy. In Azorhizobium caulinodans (strain ATCC 43989 / DSM 5975 / JCM 20966 / LMG 6465 / NBRC 14845 / NCIMB 13405 / ORS 571), this protein is Small ribosomal subunit protein uS4.